Here is a 180-residue protein sequence, read N- to C-terminus: Der GTPase-activating protein YihI (180 aa).

Disordered stretches follow at residues 1–90 and 145–180; these read MSRK…QERR and EPEEDEDFTAPAVKGSRNDDDLLADFDDINFDDYKG. Basic and acidic residues predominate over residues 23–32; that stretch reads NRTESDVEGR. A compositionally biased stretch (basic residues) spans 33–43; the sequence is LRKRAKKRKGL. 2 stretches are compositionally biased toward basic and acidic residues: residues 50-68 and 80-90; these read SDAEEQKRQAAAQKRDPRL and PVKKQTKQERR. A compositionally biased stretch (acidic residues) spans 165 to 180; that stretch reads DLLADFDDINFDDYKG.

This sequence belongs to the YihI family. In terms of assembly, interacts with Der.

Its function is as follows. A GTPase-activating protein (GAP) that modifies Der/EngA GTPase function. May play a role in ribosome biogenesis. The chain is Der GTPase-activating protein YihI from Vibrio campbellii (strain ATCC BAA-1116).